The chain runs to 1244 residues: ATP-dependent helicase/nuclease subunit A (1244 aa).

The UvrD-like helicase ATP-binding domain maps to 4–477; the sequence is TKWTEEQLSA…IQLYKNFRSR (474 aa). 25 to 32 serves as a coordination point for ATP; the sequence is AAAGSGKT. In terms of domain architecture, UvrD-like helicase C-terminal spans 517-811; sequence KNVDDIIGGP…RIMSIHKSKG (295 aa).

Belongs to the helicase family. AddA subfamily. As to quaternary structure, heterodimer of AddA and AddB/RexB. The cofactor is Mg(2+).

The enzyme catalyses Couples ATP hydrolysis with the unwinding of duplex DNA by translocating in the 3'-5' direction.. It carries out the reaction ATP + H2O = ADP + phosphate + H(+). In terms of biological role, the heterodimer acts as both an ATP-dependent DNA helicase and an ATP-dependent, dual-direction single-stranded exonuclease. Recognizes the chi site generating a DNA molecule suitable for the initiation of homologous recombination. The AddA nuclease domain is required for chi fragment generation; this subunit has the helicase and 3' -&gt; 5' nuclease activities. In Clostridium botulinum (strain Alaska E43 / Type E3), this protein is ATP-dependent helicase/nuclease subunit A.